Consider the following 140-residue polypeptide: MNTGATLIELLAVALGGGTGAAARYVLDTHLKSKHGWAPLWSLAVVNLLGTVVLGLVLGYTSQHLDGAAGSTSAGETQDILYPLLGIGLAGGFTTFSTVMVEVFTRPQPARRIAGVVGMAVVCCAVFLPALWCGALLAGA.

Transmembrane regions (helical) follow at residues 3–23 (TGATLIELLAVALGGGTGAAA), 38–58 (APLWSLAVVNLLGTVVLGLVL), 80–100 (ILYPLLGIGLAGGFTTFSTVM), and 113–133 (IAGVVGMAVVCCAVFLPALWC). Positions 91 and 94 each coordinate Na(+).

The protein belongs to the fluoride channel Fluc/FEX (TC 1.A.43) family.

It localises to the cell membrane. The enzyme catalyses fluoride(in) = fluoride(out). Na(+) is not transported, but it plays an essential structural role and its presence is essential for fluoride channel function. Fluoride-specific ion channel. Important for reducing fluoride concentration in the cell, thus reducing its toxicity. This Corynebacterium jeikeium (strain K411) protein is Fluoride-specific ion channel FluC 1.